The chain runs to 321 residues: ATP-dependent 6-phosphofructokinase (321 aa).

Position 12 (glycine 12) interacts with ATP. ADP-binding positions include 22-26 (RGVVR) and 55-60 (RYSVSD). Residues 73 to 74 (RF) and 103 to 106 (GDGS) each bind ATP. A Mg(2+)-binding site is contributed by aspartate 104. Position 127–129 (127–129 (TID)) interacts with substrate. The Proton acceptor role is filled by aspartate 129. Arginine 156 provides a ligand contact to ADP. Substrate-binding positions include arginine 164 and 171–173 (MGR). Residues 187-189 (GCE), arginine 213, and 215-217 (KRH) each bind ADP. Substrate contacts are provided by residues glutamate 224, arginine 245, and 251–254 (HIQR).

This sequence belongs to the phosphofructokinase type A (PFKA) family. ATP-dependent PFK group I subfamily. Prokaryotic clade 'B1' sub-subfamily. As to quaternary structure, homotetramer. Requires Mg(2+) as cofactor.

It is found in the cytoplasm. It carries out the reaction beta-D-fructose 6-phosphate + ATP = beta-D-fructose 1,6-bisphosphate + ADP + H(+). The protein operates within carbohydrate degradation; glycolysis; D-glyceraldehyde 3-phosphate and glycerone phosphate from D-glucose: step 3/4. With respect to regulation, allosterically activated by ADP and other diphosphonucleosides, and allosterically inhibited by phosphoenolpyruvate. In terms of biological role, catalyzes the phosphorylation of D-fructose 6-phosphate to fructose 1,6-bisphosphate by ATP, the first committing step of glycolysis. The chain is ATP-dependent 6-phosphofructokinase from Haemophilus influenzae (strain PittEE).